We begin with the raw amino-acid sequence, 417 residues long: Type IV inositol polyphosphate 5-phosphatase 9 (417 aa).

Catalytic regions lie at residues 258-273 (DRVIFLGDLNYRISLP) and 339-354 (KKRAPAWCDRIIWYGN).

This sequence belongs to the inositol polyphosphate 5-phosphatase family. Specifically expressed in roots.

The enzyme catalyses a 1,2-diacyl-sn-glycero-3-phospho-(1D-myo-inositol-4,5-bisphosphate) + H2O = a 1,2-diacyl-sn-glycero-3-phospho-(1D-myo-inositol 4-phosphate) + phosphate. The catalysed reaction is a 1,2-diacyl-sn-glycero-3-phospho-(1D-myo-inositol-3,4,5-trisphosphate) + H2O = a 1,2-diacyl-sn-glycero-3-phospho-(1D-myo-inositol-3,4-bisphosphate) + phosphate. Has phosphatase activity toward PtdIns(4,5)P2 and at a lower extent toward PtdIns(3,4,5)P3 but not toward Ins(1,4,5)P3. Functions in salt stress response by regulating reactive oxygen species (ROS) production, endocytosis, Ca(2+) influx and stress-responsive genes expression. This is Type IV inositol polyphosphate 5-phosphatase 9 from Arabidopsis thaliana (Mouse-ear cress).